The following is a 234-amino-acid chain: MSKAPFLSRAAFARVTNPLARGLLRIGLTPDAVTIIGTTASVAGALVLFPMGKLFPGACVVWFFVLFDMLDGAMARERGGGTRFGAVLDAACDRISDGAVFGGLLWWVAFGMRDRLLVVATLICLVTSQVISYIKARAEASGLRGDGGIIERPERLIIVLAGAGVSDFPFIAWPPALPVAMWLLAVTSVITCGQRLYTVWTSPGATDLLVPSAPVRDDDAQGHPRSGDPGKTQR.

Transmembrane regions (helical) follow at residues 28-48 and 54-70; these read LTPDAVTIIGTTASVAGALVL and LFPGACVVWFFVLFDML. Residue 31-34 participates in a CDP-1,2-diacyl-sn-glycerol binding; the sequence is DAVT. Residues aspartate 68 and aspartate 71 each contribute to the Mg(2+) site. The a CDP-1,2-diacyl-sn-glycerol site is built by glycine 72, arginine 76, and threonine 82. Aspartate 89 and aspartate 93 together coordinate Mg(2+). A run of 4 helical transmembrane segments spans residues 91-110, 116-134, 155-173, and 179-197; these read ACDRISDGAVFGGLLWWVAF, LLVVATLICLVTSQVISYI, RLIIVLAGAGVSDFPFIAW, and VAMWLLAVTSVITCGQRLY. The Proton acceptor role is filled by aspartate 93. The segment at 211-234 is disordered; the sequence is PSAPVRDDDAQGHPRSGDPGKTQR. Basic and acidic residues predominate over residues 215–228; sequence VRDDDAQGHPRSGD.

It belongs to the CDP-alcohol phosphatidyltransferase class-I family. Homodimer. It depends on Mg(2+) as a cofactor.

Its subcellular location is the cell membrane. It catalyses the reaction a CDP-1,2-diacyl-sn-glycerol + 1D-myo-inositol 3-phosphate = a 1,2-diacyl-sn-glycero-3-phospho-(1D-myo-inositol-3-phosphate) + CMP + H(+). The catalysed reaction is 1,2-di-(9Z-octadecenoyl)-sn-glycero-3-cytidine-5'-diphosphate + 1D-myo-inositol 3-phosphate = 1,2-di-(9Z-octadecenoyl)-sn-glycero-3-phospho-(1D-myo-inositol-3-phosphate) + CMP + H(+). It functions in the pathway phospholipid metabolism; phosphatidylinositol phosphate biosynthesis. Catalyzes the conjugation of the 1'-hydroxyl group of D-myo-inositol-3-phosphate (also named L-myo-inositol-1-phosphate) with a lipid tail of cytidine diphosphate diacylglycerol (CDP-DAG), forming phosphatidylinositol phosphate (PIP) and CMP. PIP is a precursor of phosphatidylinositol (PI) which is an essential lipid for mycobacteria required for formation of their cell wall. The sequence is that of Phosphatidylinositol phosphate synthase from Mycobacterium marinum (strain ATCC BAA-535 / M).